The sequence spans 248 residues: Phosphoribosylaminoimidazole-succinocarboxamide synthase (248 aa).

This sequence belongs to the SAICAR synthetase family.

The enzyme catalyses 5-amino-1-(5-phospho-D-ribosyl)imidazole-4-carboxylate + L-aspartate + ATP = (2S)-2-[5-amino-1-(5-phospho-beta-D-ribosyl)imidazole-4-carboxamido]succinate + ADP + phosphate + 2 H(+). The protein operates within purine metabolism; IMP biosynthesis via de novo pathway; 5-amino-1-(5-phospho-D-ribosyl)imidazole-4-carboxamide from 5-amino-1-(5-phospho-D-ribosyl)imidazole-4-carboxylate: step 1/2. This is Phosphoribosylaminoimidazole-succinocarboxamide synthase (purC) from Methanothermobacter thermautotrophicus (strain ATCC 29096 / DSM 1053 / JCM 10044 / NBRC 100330 / Delta H) (Methanobacterium thermoautotrophicum).